A 402-amino-acid chain; its full sequence is MNTVYVVGTCDTKGGELRYLRDLIRQAGCDAVLVDVSVSEFHSQAADVDVQPSEVARFHPNPPKPEDLKDRGKAVAAMAQALVEFIRSRPDVDGIIGAGGTGGTALIAPALRALPIGTPKVLVSTVASGNVAPYVGPTDISMMYSVTDVSGLNRISRVVLANAAHSVAGMVLNKVSAAKDERPAIGLTMFGVTTPCVQAVTRALEADFDCLVFHATGTGGQSFEKLADSALLVGGIDVSTTEVCDYLVGGVFPCTADRFGAFARTRLPYVGSCGALDMVNFGAMDTVPSRFRSRRLHVHNPQVTLMRTTPEECNRIGEWIAERLNLCEGTVRFLIPELGVSAIDAPGQPFHDPEADSALFAALERTLRRTTKRQLIRVPLHINDPQFAELLVTNFKEALREH.

The protein belongs to the UPF0261 family.

This is UPF0261 protein y4oU from Sinorhizobium fredii (strain NBRC 101917 / NGR234).